The sequence spans 224 residues: UPF0758 protein ABO_0214 (224 aa).

The 123-residue stretch at 102–224 (PLDNPDKAGQ…WVSLASRGAV (123 aa)) folds into the MPN domain. 3 residues coordinate Zn(2+): His173, His175, and Asp186. Positions 173 to 186 (HNHPSGVAEPSQSD) match the JAMM motif motif.

The protein belongs to the UPF0758 family.

The protein is UPF0758 protein ABO_0214 of Alcanivorax borkumensis (strain ATCC 700651 / DSM 11573 / NCIMB 13689 / SK2).